The primary structure comprises 128 residues: Nascent polypeptide-associated complex protein (128 aa).

In terms of domain architecture, NAC-A/B spans 8–75 (PRMLKKMQKM…PKKIKKEKVE (68 aa)).

Belongs to the NAC-alpha family. In terms of assembly, homodimer. Interacts with the ribosome. Binds ribosomal RNA.

Its function is as follows. Contacts the emerging nascent chain on the ribosome. The chain is Nascent polypeptide-associated complex protein from Methanocaldococcus jannaschii (strain ATCC 43067 / DSM 2661 / JAL-1 / JCM 10045 / NBRC 100440) (Methanococcus jannaschii).